The following is a 299-amino-acid chain: Zinc finger protein 414 (299 aa).

2 stretches are compositionally biased toward polar residues: residues 1–20 and 70–80; these read MEEL…SSSN and SCQTSSTTRGV. Residues 1–102 form a disordered region; the sequence is MEELSGPSSD…PPPGKQIPCS (102 aa). C2H2-type zinc fingers lie at residues 99 to 123 and 135 to 159; these read IPCS…LRTH and FRCS…GKLH. The C2H2-type 3; degenerate zinc-finger motif lies at 166–190; it reads FKCENCLLRFRTHRSLFKHLHVCID. 2 disordered regions span residues 193 to 228 and 254 to 299; these read QNPA…PFPL and PRLR…GACR. Positions 203-215 are enriched in basic and acidic residues; it reads LDKEPPVPERPPE. The segment covering 217 to 228 has biased composition (low complexity); that stretch reads DPSSSLGLPFPL. Residues 268-285 show a composition bias toward polar residues; the sequence is TSSTAIWKKSQGATSSPR.

Belongs to the krueppel C2H2-type zinc-finger protein family.

The protein resides in the nucleus. May be involved in transcriptional regulation. This chain is Zinc finger protein 414 (Znf414), found in Rattus norvegicus (Rat).